The primary structure comprises 938 residues: Respiratory burst oxidase homolog protein C (938 aa).

Residues 1 to 63 (MQNSENHHPH…DIGTSAGAGA (63 aa)) form a disordered region. The Cytoplasmic portion of the chain corresponds to 1–369 (MQNSENHHPH…MYFLLDNWQR (369 aa)). A coiled-coil region spans residues 115–141 (ASLVRNASSRIRQVSQELKRLASLNKR). 2 EF-hand-like regions span residues 185 to 195 (TAPTTGLLPRA) and 222 to 233 (RNITTDSINKAQ). EF-hand domains are found at residues 245–280 (SFDT…SASA) and 289–324 (QSDE…APNQ). Ca(2+) contacts are provided by Asp258, Asp260, Asp262, Arg264, and Glu269. A helical membrane pass occupies residues 370 to 390 (VWVLLLWIGIMAVLFTWKYIQ). Topologically, residues 391–402 (YKQKAAYDVMGP) are extracellular. The chain crosses the membrane as a helical span at residues 403-423 (CVCLAKGAAETIKLNMAIILL). A Ferric oxidoreductase domain is found at 408–565 (KGAAETIKLN…LFIIVYTLLI (158 aa)). The Cytoplasmic portion of the chain corresponds to 424-454 (PVCRNTITWLRNKTRLGSAVPFDDNLNFHKV). Residues 455 to 475 (IAVAIALGVAIHGLAHLTCDF) form a helical membrane-spanning segment. The Extracellular segment spans residues 476–509 (PKLLNASEEAYEPMIYYFGEQPESYWWFVRGVEG). The chain crosses the membrane as a helical span at residues 510 to 530 (VTGIIMVVLMAIAFTLATPWF). The Cytoplasmic segment spans residues 531-545 (RRGRVSFPKPFHKLT). Residues 546-566 (GFNAFWYSHHLFIIVYTLLIV) traverse the membrane as a helical segment. At 567-580 (HGEKLYITKDWYKR) the chain is on the extracellular side. A helical transmembrane segment spans residues 581–599 (STWMYLTVPLVLYAGERLL). Residues 599–727 (LRAFRSSIKA…DGPYGAPAQD (129 aa)) form the FAD-binding FR-type domain. Residues 600 to 732 (RAFRSSIKAV…APAQDYKQYE (133 aa)) lie on the Cytoplasmic side of the membrane. A helical transmembrane segment spans residues 733-753 (VVLLVGLGIGATPMISIVKDI). At 754–938 (VNNMKAMDEE…TKFDFHKENF (185 aa)) the chain is on the extracellular side. A disordered region spans residues 762–796 (EEENSLENGNGMSNAAQNASPNMAQKRGKSSSASG). Positions 767-784 (LENGNGMSNAAQNASPNM) are enriched in polar residues.

It belongs to the RBOH (TC 5.B.1.3) family. In terms of assembly, monomer and homodimer. Phosphorylated by CPK. In terms of tissue distribution, expressed in leaves.

The protein resides in the membrane. Its function is as follows. Calcium-dependent NADPH oxidase that generates superoxide. May be responsible for the oxidative burst in response to pathogen attack in the leaves. The chain is Respiratory burst oxidase homolog protein C (RBOHC) from Solanum tuberosum (Potato).